The chain runs to 317 residues: UV DNA damage endonuclease (317 aa).

Belongs to the uve1/UvsE family.

Functionally, component in a DNA repair pathway. Removal of UV LIGHT damaged nucleotides. Recognizes pyrimidine dimers and cleave a phosphodiester bond immediately 5' to the lesion. The chain is UV DNA damage endonuclease from Bacillus cereus (strain ATCC 10987 / NRS 248).